Reading from the N-terminus, the 547-residue chain is MAKQVAFNEEARRALKRGVDVVADAVKTTLGPRGRNVAIDKKFGSPTVTHDGVTVAKEIELKDPFENMGARLLVEAATKTNDVAGDGTTTATVLAQAIVHEGLRQVAAGANSMMIKRGLDKGTAVLLQAIRDLAKPVNDRTDISSVATISAADSSIGDLIAEVMDKVGKDGVITVEEGKGLGYETEYTEGMQFDRGYISAYFVTNSDRMESDLEDPYILITDKKISSIQEILPVLEKVLQFTKNFVIIAEDIDGEALPTLVLNKLRGTINVLAIKAPGFGDRRKAMLQDIAILTGGTVISEEIGRKLDSATVEDLGRARRVIANKDETTVIEGRGDEDAIKARIEQIRAQIETTTSDFDREKLQERLAKLAGGVAVLKVGAATEPELKERKHRVEDALSTARAAVEEGIVPGGGIALLSVLPALDSVVPANQDEKAAVLILRRALEEPIRQLARNAGEDGAVIIDTVRRLQKEKGDSTLGYNVITGEYGSMVEMGIIDPAKVTRSALQNAVSIASMILTTDALVADIPEKEAAPAPGGMGGMGGMDF.

Residues Thr29–Pro32, Asp86–Thr90, Gly413, and Asp498 each bind ATP.

This sequence belongs to the chaperonin (HSP60) family. Forms a cylinder of 14 subunits composed of two heptameric rings stacked back-to-back. Interacts with the co-chaperonin GroES.

It is found in the cytoplasm. The catalysed reaction is ATP + H2O + a folded polypeptide = ADP + phosphate + an unfolded polypeptide.. Functionally, together with its co-chaperonin GroES, plays an essential role in assisting protein folding. The GroEL-GroES system forms a nano-cage that allows encapsulation of the non-native substrate proteins and provides a physical environment optimized to promote and accelerate protein folding. The polypeptide is Chaperonin GroEL (Herpetosiphon aurantiacus (strain ATCC 23779 / DSM 785 / 114-95)).